The primary structure comprises 120 residues: Probable early E4 13 kDa protein (120 aa).

The chain is Probable early E4 13 kDa protein from Human adenovirus A serotype 12 (HAdV-12).